Reading from the N-terminus, the 123-residue chain is uncharacterized protein (123 aa).

This is an uncharacterized protein from Schizosaccharomyces pombe (strain 972 / ATCC 24843) (Fission yeast).